Reading from the N-terminus, the 32-residue chain is MIRMDIVGITWAALMVVFTFSLSLVVWGRSGL.

A helical transmembrane segment spans residues 6–26; the sequence is IVGITWAALMVVFTFSLSLVV.

Belongs to the PetN family. As to quaternary structure, the 4 large subunits of the cytochrome b6-f complex are cytochrome b6, subunit IV (17 kDa polypeptide, PetD), cytochrome f and the Rieske protein, while the 4 small subunits are PetG, PetL, PetM and PetN. The complex functions as a dimer.

The protein resides in the plastid. Its subcellular location is the chloroplast thylakoid membrane. Component of the cytochrome b6-f complex, which mediates electron transfer between photosystem II (PSII) and photosystem I (PSI), cyclic electron flow around PSI, and state transitions. The polypeptide is Cytochrome b6-f complex subunit 8 (Pinus koraiensis (Korean pine)).